Consider the following 353-residue polypeptide: ATP-dependent kinase YFH7 (353 aa).

31-39 (GPPGSGKST) provides a ligand contact to ATP.

It belongs to the YFH7 family.

Functionally, ATP-dependent kinase that could be involved in endoplasmic reticulum membrane assembly. The sequence is that of ATP-dependent kinase YFH7 (YFH7) from Kluyveromyces lactis (strain ATCC 8585 / CBS 2359 / DSM 70799 / NBRC 1267 / NRRL Y-1140 / WM37) (Yeast).